Reading from the N-terminus, the 121-residue chain is Large ribosomal subunit protein bL12 (121 aa).

This sequence belongs to the bacterial ribosomal protein bL12 family. Homodimer. Part of the ribosomal stalk of the 50S ribosomal subunit. Forms a multimeric L10(L12)X complex, where L10 forms an elongated spine to which 2 to 4 L12 dimers bind in a sequential fashion. Binds GTP-bound translation factors.

Functionally, forms part of the ribosomal stalk which helps the ribosome interact with GTP-bound translation factors. Is thus essential for accurate translation. This chain is Large ribosomal subunit protein bL12, found in Tolumonas auensis (strain DSM 9187 / NBRC 110442 / TA 4).